Consider the following 348-residue polypeptide: Small ribosomal subunit biogenesis GTPase RsgA (348 aa).

The interval 1–32 (MAKQKLTQNQKRRIHSNNAKALDRHRRQTKKQ) is disordered. The 169-residue stretch at 106–274 (KNELSRPDYY…LIDSPGIREF (169 aa)) folds into the CP-type G domain. Residues 162 to 165 (NKID) and 216 to 224 (GQSGVGKSS) each bind GTP. 4 residues coordinate Zn(2+): Cys-298, Cys-303, His-305, and Cys-311.

Belongs to the TRAFAC class YlqF/YawG GTPase family. RsgA subfamily. As to quaternary structure, monomer. Associates with 30S ribosomal subunit, binds 16S rRNA. Zn(2+) serves as cofactor.

The protein localises to the cytoplasm. Its function is as follows. One of several proteins that assist in the late maturation steps of the functional core of the 30S ribosomal subunit. Helps release RbfA from mature subunits. May play a role in the assembly of ribosomal proteins into the subunit. Circularly permuted GTPase that catalyzes slow GTP hydrolysis, GTPase activity is stimulated by the 30S ribosomal subunit. The chain is Small ribosomal subunit biogenesis GTPase RsgA from Actinobacillus succinogenes (strain ATCC 55618 / DSM 22257 / CCUG 43843 / 130Z).